Consider the following 614-residue polypeptide: RNA polymerase sigma factor RpoD (614 aa).

The tract at residues 168–245 (DPDDNIAAPT…PEEKRSYPQG (78 aa)) is disordered. Residues 193–209 (EADDDEEESEGGDDEEE) show a composition bias toward acidic residues. Positions 215–232 (TRSSQPSVSVRYPSSFSD) are enriched in polar residues. The interval 380 to 450 (MVEANLRLVI…TRSIADQART (71 aa)) is sigma-70 factor domain-2. The short motif at 404–407 (DLIQ) is the Interaction with polymerase core subunit RpoC element. The segment at 459-535 (ETINKLNRIS…DSTMQSPIYV (77 aa)) is sigma-70 factor domain-3. Residues 548–601 (VLSGLTAREAKVLRMRFGIDMNTDHTLEEVGKQFDVTRERIRQIEAKAWRKLRH) are sigma-70 factor domain-4. Residues 574–593 (LEEVGKQFDVTRERIRQIEA) constitute a DNA-binding region (H-T-H motif).

The protein belongs to the sigma-70 factor family. RpoD/SigA subfamily. As to quaternary structure, interacts transiently with the RNA polymerase catalytic core.

The protein localises to the cytoplasm. Sigma factors are initiation factors that promote the attachment of RNA polymerase to specific initiation sites and are then released. This sigma factor is the primary sigma factor during exponential growth. This is RNA polymerase sigma factor RpoD from Pseudomonas putida (Arthrobacter siderocapsulatus).